Reading from the N-terminus, the 104-residue chain is L-rhamnose mutarotase (104 aa).

Residue Tyr18 coordinates substrate. His22 functions as the Proton donor in the catalytic mechanism. Residues Tyr41 and 76 to 77 each bind substrate; that span reads WW.

The protein belongs to the rhamnose mutarotase family. In terms of assembly, homodimer.

The protein resides in the cytoplasm. The catalysed reaction is alpha-L-rhamnose = beta-L-rhamnose. It functions in the pathway carbohydrate metabolism; L-rhamnose metabolism. Its function is as follows. Involved in the anomeric conversion of L-rhamnose. In Mannheimia succiniciproducens (strain KCTC 0769BP / MBEL55E), this protein is L-rhamnose mutarotase.